A 280-amino-acid polypeptide reads, in one-letter code: Large ribosomal subunit protein uL2 (280 aa).

2 disordered regions span residues 27–58 (STPEKSLVRPLHGHGGRNAHGRITTRHKGGGH) and 226–280 (MNPV…KHGR). 2 stretches are compositionally biased toward basic residues: residues 37–58 (LHGHGGRNAHGRITTRHKGGGH) and 268–280 (IVRRRRTGKKHGR).

This sequence belongs to the universal ribosomal protein uL2 family. In terms of assembly, part of the 50S ribosomal subunit. Forms a bridge to the 30S subunit in the 70S ribosome.

One of the primary rRNA binding proteins. Required for association of the 30S and 50S subunits to form the 70S ribosome, for tRNA binding and peptide bond formation. It has been suggested to have peptidyltransferase activity; this is somewhat controversial. Makes several contacts with the 16S rRNA in the 70S ribosome. The chain is Large ribosomal subunit protein uL2 from Mycobacterium ulcerans (strain Agy99).